A 303-amino-acid chain; its full sequence is Putative CRISPR-associated endonuclease Cas1 2 (303 aa).

Glu-149 contacts Mn(2+).

This sequence belongs to the CRISPR-associated endonuclease Cas1 family. In terms of assembly, homodimer, forms a heterotetramer with a Cas2 homodimer. Mg(2+) serves as cofactor. It depends on Mn(2+) as a cofactor.

Its function is as follows. CRISPR (clustered regularly interspaced short palindromic repeat), is an adaptive immune system that provides protection against mobile genetic elements (viruses, transposable elements and conjugative plasmids). CRISPR clusters contain sequences complementary to antecedent mobile elements and target invading nucleic acids. CRISPR clusters are transcribed and processed into CRISPR RNA (crRNA). Acts as a dsDNA endonuclease. Involved in the integration of spacer DNA into the CRISPR cassette. This Methanospirillum hungatei JF-1 (strain ATCC 27890 / DSM 864 / NBRC 100397 / JF-1) protein is Putative CRISPR-associated endonuclease Cas1 2.